The chain runs to 553 residues: Putative transport protein YidE (553 aa).

5 consecutive transmembrane segments (helical) span residues 4-24, 28-48, 65-85, 95-115, and 158-178; these read IALT…IGNV, GIGL…HFVS, FGLI…FFAS, LFAV…HKLF, and MSYA…MWML. RCK C-terminal domains lie at 191 to 276 and 279 to 361; these read QQHE…VIGQ and DTSL…VLGN. Transmembrane regions (helical) follow at residues 371–391, 393–413, 439–459, 464–484, 493–513, and 533–553; these read MLPV…PVFV, GFPA…ALIL, IVLF…NTLV, LSWI…VGIL, YLTM…LAFA, and LVMF…WSIG.

Belongs to the AAE transporter (TC 2.A.81) family. YidE subfamily.

The protein localises to the cell membrane. This Escherichia coli (strain ATCC 8739 / DSM 1576 / NBRC 3972 / NCIMB 8545 / WDCM 00012 / Crooks) protein is Putative transport protein YidE.